The chain runs to 504 residues: Cytochrome P450 3A41 (504 aa).

Residue cysteine 443 coordinates heme.

Belongs to the cytochrome P450 family. It depends on heme as a cofactor. Expressed in liver. Also expressed in the kidneys of female mice, with traces in the stomach, ovary, and heart of female mice and in the testis of male mice.

The protein resides in the endoplasmic reticulum membrane. The protein localises to the microsome membrane. The catalysed reaction is an organic molecule + reduced [NADPH--hemoprotein reductase] + O2 = an alcohol + oxidized [NADPH--hemoprotein reductase] + H2O + H(+). The protein is Cytochrome P450 3A41 (Cyp3a41a) of Mus musculus (Mouse).